The chain runs to 764 residues: Semaphorin-3D (764 aa).

The first 41 residues, methionine 1–cysteine 41, serve as a signal peptide directing secretion. The Sema domain maps to arginine 48–leucine 535. Cysteine 121 and cysteine 132 form a disulfide bridge. Asparagine 143 carries N-linked (GlcNAc...) asparagine glycosylation. 3 disulfide bridges follow: cysteine 150/cysteine 159, cysteine 290/cysteine 402, and cysteine 314/cysteine 362. Residue asparagine 490 is glycosylated (N-linked (GlcNAc...) asparagine). An intrachain disulfide couples cysteine 538 to cysteine 556. Asparagine 610 carries an N-linked (GlcNAc...) asparagine glycan. In terms of domain architecture, Ig-like C2-type spans glycine 661 to glutamate 740. An intrachain disulfide couples cysteine 668 to cysteine 733. The disordered stretch occupies residues glutamine 743 to histidine 764.

Belongs to the semaphorin family.

It localises to the secreted. May play a role in the guidance of several axon pathways. The chain is Semaphorin-3D (sema3d) from Danio rerio (Zebrafish).